The chain runs to 116 residues: Iron-sulfur cluster insertion protein ErpA (116 aa).

3 residues coordinate iron-sulfur cluster: cysteine 44, cysteine 108, and cysteine 110.

Belongs to the HesB/IscA family. Homodimer. The cofactor is iron-sulfur cluster.

Required for insertion of 4Fe-4S clusters for at least IspG. The sequence is that of Iron-sulfur cluster insertion protein ErpA from Nitrosococcus oceani (strain ATCC 19707 / BCRC 17464 / JCM 30415 / NCIMB 11848 / C-107).